Reading from the N-terminus, the 430-residue chain is METGRRRTIPEVEILARLPLRSIARFKSVCKRWKSVIESDYFRRLFGSFHRSSSTSWSIMFRTEYLREMTQAIGFHGCKTWDLPKSLVSYIMPFQEYPNLPTSEYYYIASSNGLIWIDVLVSRIKNKVYSYKSFVGNPVLQEWVEIPQPPNPWVQDKHPWYPSPYSGVGMVTRVENGVVSSFKMVRTVQMELIDRRDEGMYLWRVCVYSSETGLWTFKQVFSSRPVHGGRVDSPVNLNGVLYMWDRYMFSNGPGVLVAHDFYGADDQCQVIPLPGANDEHEHEHDDEHEHVRRCLTTSGEDVIFIEVIHRILKAWRLHNKESERWQLIWEVVMPSFISDVNCFPLAMNPFDTYIVYLWDRQHGCLVSGYLQAQEFIVHQESENGSSSEGDCCRVNTSGTEGYMEERCDGVLMLSQFVLPSWMDSVPRPPN.

Residues 1–45 form the F-box domain; sequence METGRRRTIPEVEILARLPLRSIARFKSVCKRWKSVIESDYFRRL.

The chain is F-box protein At1g49990 from Arabidopsis thaliana (Mouse-ear cress).